Consider the following 101-residue polypeptide: Small ribosomal subunit protein uS14 (101 aa).

It belongs to the universal ribosomal protein uS14 family. Part of the 30S ribosomal subunit. Contacts proteins S3 and S10.

Functionally, binds 16S rRNA, required for the assembly of 30S particles and may also be responsible for determining the conformation of the 16S rRNA at the A site. The sequence is that of Small ribosomal subunit protein uS14 from Synechococcus sp. (strain JA-3-3Ab) (Cyanobacteria bacterium Yellowstone A-Prime).